We begin with the raw amino-acid sequence, 612 residues long: 1,8-cineole synthase, chloroplastic (612 aa).

A chloroplast-targeting transit peptide spans 1–52 (MALVSGAPLASRSCLNKSLISSTHELKPLRRTILPTLRWKSATPSINMCLTT). Mg(2+) is bound by residues D363, D367, and D515. The short motif at 363-367 (DDIYD) is the DDXXD motif element.

The protein belongs to the terpene synthase family. Tpsd subfamily. It depends on Mg(2+) as a cofactor. Mn(2+) serves as cofactor.

Its subcellular location is the plastid. It localises to the chloroplast. It carries out the reaction (2E)-geranyl diphosphate + H2O = 1,8-cineole + diphosphate. It participates in terpene metabolism; oleoresin biosynthesis. In terms of biological role, terpene synthase (TPS) involved in the biosynthesis of monoterpene natural products included in conifer oleoresin secretions and volatile emissions; these compounds contribute to biotic and abiotic stress defense against herbivores and pathogens. Catalyzes the conversion of (2E)-geranyl diphosphate (GPP) to 1,8-cineole. This chain is 1,8-cineole synthase, chloroplastic, found in Picea engelmannii x Picea glauca (Hybrid white spruce).